Consider the following 457-residue polypeptide: Argininosuccinate lyase (457 aa).

It belongs to the lyase 1 family. Argininosuccinate lyase subfamily.

The protein localises to the cytoplasm. The enzyme catalyses 2-(N(omega)-L-arginino)succinate = fumarate + L-arginine. Its pathway is amino-acid biosynthesis; L-arginine biosynthesis; L-arginine from L-ornithine and carbamoyl phosphate: step 3/3. This is Argininosuccinate lyase from Staphylococcus carnosus (strain TM300).